The primary structure comprises 361 residues: Phospho-N-acetylmuramoyl-pentapeptide-transferase (361 aa).

10 helical membrane-spanning segments follow: residues 28-48, 73-93, 98-118, 132-152, 168-188, 199-219, 235-255, 263-283, 288-308, and 338-358; these read LAILTSFFFTFIIAPPCIRWL, TMGGIIITASVLVAVLMWGNL, MWIMIISFLGFGLIGFIDDYL, YKLFAQLLLASSVTLFLYFNP, WLIDLGIFYLPFAIFVIVGSS, GLAAGLVGIASIVNAVLLYIS, GTGELAVFCGAMLGACLGFLW, VFMGDVGSLSLGGALGSLAVI, IVLALVGGIFVVEALSVILQV, and KVIVRFWIIGIILALLSLLTL.

This sequence belongs to the glycosyltransferase 4 family. MraY subfamily. The cofactor is Mg(2+).

It is found in the cell inner membrane. It catalyses the reaction UDP-N-acetyl-alpha-D-muramoyl-L-alanyl-gamma-D-glutamyl-meso-2,6-diaminopimeloyl-D-alanyl-D-alanine + di-trans,octa-cis-undecaprenyl phosphate = di-trans,octa-cis-undecaprenyl diphospho-N-acetyl-alpha-D-muramoyl-L-alanyl-D-glutamyl-meso-2,6-diaminopimeloyl-D-alanyl-D-alanine + UMP. The protein operates within cell wall biogenesis; peptidoglycan biosynthesis. Its function is as follows. Catalyzes the initial step of the lipid cycle reactions in the biosynthesis of the cell wall peptidoglycan: transfers peptidoglycan precursor phospho-MurNAc-pentapeptide from UDP-MurNAc-pentapeptide onto the lipid carrier undecaprenyl phosphate, yielding undecaprenyl-pyrophosphoryl-MurNAc-pentapeptide, known as lipid I. This Thermodesulfovibrio yellowstonii (strain ATCC 51303 / DSM 11347 / YP87) protein is Phospho-N-acetylmuramoyl-pentapeptide-transferase.